A 356-amino-acid chain; its full sequence is Phenylalanine dehydrogenase (356 aa).

Residue arginine 43 coordinates NAD(+). Lysine 67 lines the L-phenylalanine pocket. Lysine 79 acts as the Proton donor/acceptor in catalysis. Residue 118–119 (PD) coordinates L-phenylalanine. NAD(+)-binding positions include aspartate 119, serine 150, threonine 154, 183–189 (GLGAVGG), 206–207 (DT), arginine 211, 240–241 (AM), and 261–263 (AAN). Asparagine 263 provides a ligand contact to L-phenylalanine.

The protein belongs to the Glu/Leu/Phe/Val dehydrogenases family. Homotetramer, dimer of dimers.

The enzyme catalyses L-phenylalanine + NAD(+) + H2O = 3-phenylpyruvate + NH4(+) + NADH + H(+). It participates in amino-acid biosynthesis; L-phenylalanine biosynthesis; L-phenylalanine from phenylpyruvate (PDH route): step 1/1. Its activity is regulated as follows. Subject to competitive inhibition by 3-phenylpropionate for the conversion of L-phenylalanine to phenylpyruvate. Subject to competitive inhibition by D-phenylalanine for the conversion of phenylpyruvate to L-phenylalanine. Catalyzes the reversible NAD(+)-dependent oxidative deamination of L-phenylalanine to phenylpyruvate. In Rhodococcus sp, this protein is Phenylalanine dehydrogenase.